The primary structure comprises 671 residues: MDLTKMGMIQLQNPNHPNALLHKANQMRLAGTLCDVVIMVDSQEFHAHRTVLACTSKMFEILFHRNSQHYTLDFLSPKTFQQILEYAYTATLQAKVEDLDDLLYAAEILEIEYLEEQCLKILETIQSSDENDTEVNMNDGGTEDDEERKGRHGRNLVGSKKHSTEESGYVSAAQQALALPGMVDQSPSVSTSFGLSTMSPTKAAVDSLMSIGQSLLQSTMHPGVGAEQPLHGNSHPMMGEIKTEMMQVDESGEHESPKAMESIASSNGERSGEPDKNRDGPGTPTRSSVITSARELHYVRDEGLGDQQAEVSQMGLEAMAGMTEKHLASLYGIPSNHKNEAMLSMPASMASSLHMSPALAMSMDFSAYGGLLPQSFIQREFFSKLGELAAGIKPDGRSLNERCNVCGAELPDNEAIEQHRKLHSGMKTYGCELCGKRFLDSLRLRMHLLSHSAGEKAIVCDQCGAQFQKEDALEAHRQIHTGSDMAIFCLLCGKRFQTQTALQQHMEVHAGVRSYICSECNRTFPSHTALKRHLRSHTAGDHPFECEFCGSCFRDESTLKGHKRIHTGEKPYECNGCGKKFSLKHQLETHYRVHTGEKPFECKLCHQRSRDYSAMIKHLRTHNGASPYQCTICLEYCPSLSAMQKHMKGHKPEDIPPDWRIEKTYLYLCYV.

In terms of domain architecture, BTB spans 34–96 (CDVVIMVDSQ…AYTATLQAKV (63 aa)). Disordered stretches follow at residues 130–167 (ENDT…TEES) and 248–289 (VDES…RSSV). Over residues 270 to 279 (RSGEPDKNRD) the composition is skewed to basic and acidic residues. Thr283 is modified (phosphothreonine). 9 C2H2-type zinc fingers span residues 401 to 423 (ERCN…RKLH), 429 to 451 (YGCE…LLSH), 458 to 480 (IVCD…RQIH), 487 to 509 (IFCL…MEVH), 515 to 537 (YICS…LRSH), 544 to 566 (FECE…KRIH), 572 to 594 (YECN…YRVH), 600 to 622 (FECK…LRTH), and 628 to 650 (YQCT…MKGH).

The protein belongs to the krueppel C2H2-type zinc-finger protein family. As to quaternary structure, interacts with btbd6a (via BTB domain). Post-translationally, polyubiquitinated, leading to its proteasomal degradation. As to expression, during early stages of primary neurogenesis, expressed in the neural epithelium, with highest levels in the forebrain and midbrain. Also expressed in a posterior-to-anterior gradient in the caudal neural plate at the 3-6 somite stage.

The protein localises to the nucleus. It localises to the cytoplasm. It functions in the pathway protein modification; protein ubiquitination. Its function is as follows. Probable transcription factor. Probable substrate-recognition component of an E3 ubiquitin-protein ligase complex which mediates the ubiquitination and subsequent proteasomal degradation of target proteins. Inhibits neurogenesis. The chain is Zinc finger and BTB domain-containing protein 16-A from Danio rerio (Zebrafish).